The primary structure comprises 165 residues: Protein SprT (165 aa).

Residues 20 to 163 (EKLAQANLKL…RCVHCGEQLV (144 aa)) enclose the SprT-like domain. Histidine 78 provides a ligand contact to Zn(2+). Glutamate 79 is a catalytic residue. Histidine 82 is a binding site for Zn(2+).

The protein belongs to the SprT family. The cofactor is Zn(2+).

The protein localises to the cytoplasm. The sequence is that of Protein SprT from Shigella flexneri serotype 5b (strain 8401).